A 139-amino-acid chain; its full sequence is Metallothiol transferase FosB (139 aa).

The 116-residue stretch at 4-119 folds into the VOC domain; it reads GINHITYSVS…DGHKLELHTG (116 aa). Residues histidine 7, histidine 66, and glutamate 115 each contribute to the Mg(2+) site. Glutamate 115 serves as the catalytic Proton donor/acceptor.

Belongs to the fosfomycin resistance protein family. FosB subfamily. As to quaternary structure, homodimer. It depends on Mg(2+) as a cofactor.

It localises to the cytoplasm. Functionally, metallothiol transferase which confers resistance to fosfomycin by catalyzing the addition of a thiol cofactor to fosfomycin. L-cysteine is probably the physiological thiol donor. The sequence is that of Metallothiol transferase FosB from Staphylococcus haemolyticus.